Consider the following 64-residue polypeptide: UPF0434 protein Oant_3286 (64 aa).

This sequence belongs to the UPF0434 family.

In Brucella anthropi (strain ATCC 49188 / DSM 6882 / CCUG 24695 / JCM 21032 / LMG 3331 / NBRC 15819 / NCTC 12168 / Alc 37) (Ochrobactrum anthropi), this protein is UPF0434 protein Oant_3286.